The sequence spans 125 residues: Large ribosomal subunit protein bL12 (125 aa).

It belongs to the bacterial ribosomal protein bL12 family. Homodimer. Part of the ribosomal stalk of the 50S ribosomal subunit. Forms a multimeric L10(L12)X complex, where L10 forms an elongated spine to which 2 to 4 L12 dimers bind in a sequential fashion. Binds GTP-bound translation factors.

In terms of biological role, forms part of the ribosomal stalk which helps the ribosome interact with GTP-bound translation factors. Is thus essential for accurate translation. The chain is Large ribosomal subunit protein bL12 from Thermus thermophilus (strain ATCC BAA-163 / DSM 7039 / HB27).